The chain runs to 455 residues: Serine--tRNA ligase (455 aa).

T252–E254 contacts L-serine. ATP contacts are provided by residues R283–E285 and V299. E306 provides a ligand contact to L-serine. E370 to S373 serves as a coordination point for ATP. L-serine is bound at residue T406.

Belongs to the class-II aminoacyl-tRNA synthetase family. Type-1 seryl-tRNA synthetase subfamily. In terms of assembly, homodimer. The tRNA molecule binds across the dimer.

It is found in the cytoplasm. The enzyme catalyses tRNA(Ser) + L-serine + ATP = L-seryl-tRNA(Ser) + AMP + diphosphate + H(+). The catalysed reaction is tRNA(Sec) + L-serine + ATP = L-seryl-tRNA(Sec) + AMP + diphosphate + H(+). The protein operates within aminoacyl-tRNA biosynthesis; selenocysteinyl-tRNA(Sec) biosynthesis; L-seryl-tRNA(Sec) from L-serine and tRNA(Sec): step 1/1. Functionally, catalyzes the attachment of serine to tRNA(Ser). Is also able to aminoacylate tRNA(Sec) with serine, to form the misacylated tRNA L-seryl-tRNA(Sec), which will be further converted into selenocysteinyl-tRNA(Sec). The sequence is that of Serine--tRNA ligase from Pyrococcus horikoshii (strain ATCC 700860 / DSM 12428 / JCM 9974 / NBRC 100139 / OT-3).